A 798-amino-acid polypeptide reads, in one-letter code: Phenylalanine--tRNA ligase beta subunit (798 aa).

In terms of domain architecture, tRNA-binding spans 39-148 (GKDLDNVVIG…EDAPIGTEYR (110 aa)). The 77-residue stretch at 401–477 (PQRAEISLNL…RMYGFDNIEA (77 aa)) folds into the B5 domain. Positions 455, 461, 464, and 465 each coordinate Mg(2+). In terms of domain architecture, FDX-ACB spans 705 to 797 (SKYPEVLRDL…IKDKYNGEIR (93 aa)).

This sequence belongs to the phenylalanyl-tRNA synthetase beta subunit family. Type 1 subfamily. As to quaternary structure, tetramer of two alpha and two beta subunits. It depends on Mg(2+) as a cofactor.

The protein localises to the cytoplasm. The catalysed reaction is tRNA(Phe) + L-phenylalanine + ATP = L-phenylalanyl-tRNA(Phe) + AMP + diphosphate + H(+). This Fusobacterium nucleatum subsp. nucleatum (strain ATCC 25586 / DSM 15643 / BCRC 10681 / CIP 101130 / JCM 8532 / KCTC 2640 / LMG 13131 / VPI 4355) protein is Phenylalanine--tRNA ligase beta subunit.